Here is a 363-residue protein sequence, read N- to C-terminus: GTPase Obg (363 aa).

In terms of domain architecture, Obg spans 1 to 159 (MKFVDEAFID…KSLKLELKVL (159 aa)). Residues 160 to 341 (ADVGLLGRPN…LVHAIFGHVQ (182 aa)) enclose the OBG-type G domain. Residues 166 to 173 (GRPNAGKS), 191 to 195 (FTTLH), 213 to 216 (DIPG), 291 to 294 (NKLD), and 322 to 324 (SAL) each bind GTP. 2 residues coordinate Mg(2+): S173 and T193. A disordered region spans residues 343–363 (GQRMDNEPPPLDPRFASAGPA).

The protein belongs to the TRAFAC class OBG-HflX-like GTPase superfamily. OBG GTPase family. As to quaternary structure, monomer. The cofactor is Mg(2+).

The protein localises to the cytoplasm. Functionally, an essential GTPase which binds GTP, GDP and possibly (p)ppGpp with moderate affinity, with high nucleotide exchange rates and a fairly low GTP hydrolysis rate. Plays a role in control of the cell cycle, stress response, ribosome biogenesis and in those bacteria that undergo differentiation, in morphogenesis control. The protein is GTPase Obg of Verminephrobacter eiseniae (strain EF01-2).